A 309-amino-acid chain; its full sequence is Thermolabile glutaminase (309 aa).

The substrate site is built by serine 64, asparagine 114, glutamate 160, asparagine 167, tyrosine 191, tyrosine 243, and valine 261.

The protein belongs to the glutaminase family. Homotetramer.

It carries out the reaction L-glutamine + H2O = L-glutamate + NH4(+). The sequence is that of Thermolabile glutaminase (glsA) from Rhizobium etli (strain ATCC 51251 / DSM 11541 / JCM 21823 / NBRC 15573 / CFN 42).